The sequence spans 171 residues: LIM domain transcription factor LMO4-B (171 aa).

Polar residues predominate over residues 1–19 (MVNNRISESTTTAVSNNGS). The disordered stretch occupies residues 1–20 (MVNNRISESTTTAVSNNGSP). 2 consecutive LIM zinc-binding domains span residues 22–84 (KACA…LFGN) and 86–148 (GACN…GLLN).

Acts as a positive cofactor of GATA transcription factors to establish the identity of the ventral mesoderm during gastrulation. Down-regulation in the dorsal mesoderm is necessary for the proper formation of this territory since, when present, lmo4 may bind ldb1 and restrict the availability of this cofactor for Spemman organizer transcription factors. At neurula stages, suppresses primary neuron differentiation and modulates gene expression at the Isthmic Organizer of the midbrain-hindbrain boundary. This is LIM domain transcription factor LMO4-B (lmo4-b) from Xenopus laevis (African clawed frog).